We begin with the raw amino-acid sequence, 714 residues long: VIN3-like protein 2 (714 aa).

A PHD-type zinc finger spans residues 164-232 (RCSCCICRKY…CFYCVSCGKA (69 aa)). A Nuclear localization signal motif is present at residues 239 to 246 (WKKQLTIA). Residues 366-463 (GSTKIRFEDV…INVLTRSAEE (98 aa)) form the Fibronectin type-III domain. A compositionally biased stretch (polar residues) spans 478-498 (LTNCSTLSSNPSSVEAESNND). A disordered region spans residues 478-530 (LTNCSTLSSNPSSVEAESNNDYIVPKKPSSKNEDNNSPSVDESAAKRMKRTTD). A VIN3-Interacting Domain (VID) region spans residues 602-714 (SMKDNCNNGD…PSGFCMKLWH (113 aa)).

In terms of assembly, self-interacts. Interacts with VIN3 and VIL1. Component of the plant homeodomain / polycomb repressive complex 2 (PHD-PRC2) large complex during prolonged cold, composed of core PRC2 components (VRN2, EZA1, FIE and MSI1), and three related PHD finger proteins (VIL1, VIL2 and VIN3) that mediates histone H3 trimethylation on 'Lys-27' (H3K27me3).

It localises to the nucleus. Its function is as follows. Maybe involved in both the vernalization and photoperiod pathways by regulating gene expression. Binds preferentially to dimethylated histone H3 'Lys-9' (H3K9me2). Promotes flowering in non-inductive photoperiods (e.g. short days) through the maintenance of the epigenetically repressed state of MAF5 via H3K9me2 and plant homeodomain / polycomb repressive complex 2 (PHD-PRC2)-dependent H3K27me3. The protein is VIN3-like protein 2 (VIL2) of Arabidopsis thaliana (Mouse-ear cress).